Consider the following 214-residue polypeptide: Thymidylate kinase (214 aa).

An ATP-binding site is contributed by 15 to 22 (GLEGAGKT).

This sequence belongs to the thymidylate kinase family.

It carries out the reaction dTMP + ATP = dTDP + ADP. In terms of biological role, phosphorylation of dTMP to form dTDP in both de novo and salvage pathways of dTTP synthesis. In Haemophilus ducreyi (strain 35000HP / ATCC 700724), this protein is Thymidylate kinase.